We begin with the raw amino-acid sequence, 288 residues long: Oxaloacetate decarboxylase (288 aa).

Ser47 serves as a coordination point for substrate. Asp85 is a Mg(2+) binding site. 2 residues coordinate substrate: Arg156 and His232.

Belongs to the isocitrate lyase/PEP mutase superfamily. Oxaloacetate decarboxylase family. As to quaternary structure, homotetramer; dimer of dimers. It depends on Mg(2+) as a cofactor.

It carries out the reaction oxaloacetate + H(+) = pyruvate + CO2. Its function is as follows. Catalyzes the decarboxylation of oxaloacetate into pyruvate. Seems to play a role in maintaining cellular concentrations of bicarbonate and pyruvate. The chain is Oxaloacetate decarboxylase from Bradyrhizobium sp. (strain BTAi1 / ATCC BAA-1182).